The chain runs to 232 residues: Large ribosomal subunit protein uL3 (232 aa).

It belongs to the universal ribosomal protein uL3 family. As to quaternary structure, part of the 50S ribosomal subunit. Forms a cluster with proteins L14 and L19.

One of the primary rRNA binding proteins, it binds directly near the 3'-end of the 23S rRNA, where it nucleates assembly of the 50S subunit. In Hydrogenobaculum sp. (strain Y04AAS1), this protein is Large ribosomal subunit protein uL3.